The sequence spans 481 residues: Tagaturonate/fructuronate epimerase (481 aa).

Asp161 acts as the Proton acceptor in catalysis. Residue His162 participates in a divalent metal cation binding. Glu266 serves as the catalytic Proton donor. Residues Lys308 and His341 each contribute to the a divalent metal cation site.

The protein belongs to the UxaE family. It depends on a divalent metal cation as a cofactor.

It catalyses the reaction keto-D-tagaturonate = keto-D-fructuronate. Its function is as follows. Catalyzes the epimerization of D-tagaturonate (D-TagA) to D-fructuronate (D-FruA). This chain is Tagaturonate/fructuronate epimerase, found in Thermotoga maritima (strain ATCC 43589 / DSM 3109 / JCM 10099 / NBRC 100826 / MSB8).